We begin with the raw amino-acid sequence, 357 residues long: MTIKISIDCMGGDHGPAVTIPAAISFVESEPDAELILVGLADQLWAELKKHKAGEHPRLSVVNATEVVTMDDTLEAALRRKKNSSMRVAINLVKQGQADACVSAGNTGALMAISRYVLKTLPGVDRPAICSILPNQKDGPTYMLDLGANVDCEPQHLHQFALMGSALVSAMEGKPRPTVGLLNVGEEDIKGNDIVKQTAVLLRADHERGTLNFYGNVEGNDIFKGTTDIVVCDGFVGNVTLKASEGLGRFVKSVLTTEFKRNPLTMLGALIARSALKAISQRLNPSRYNGGSLLGLRGLVFKSHGGADAYGYQWAIKRAFDAAKYDVLARISTKIADLMPQSALTPLPEDSVTATEQ.

This sequence belongs to the PlsX family. In terms of assembly, homodimer. Probably interacts with PlsY.

It localises to the cytoplasm. It catalyses the reaction a fatty acyl-[ACP] + phosphate = an acyl phosphate + holo-[ACP]. The protein operates within lipid metabolism; phospholipid metabolism. Functionally, catalyzes the reversible formation of acyl-phosphate (acyl-PO(4)) from acyl-[acyl-carrier-protein] (acyl-ACP). This enzyme utilizes acyl-ACP as fatty acyl donor, but not acyl-CoA. The protein is Phosphate acyltransferase of Herminiimonas arsenicoxydans.